Reading from the N-terminus, the 334-residue chain is Beta-glucanase (334 aa).

Residues 1–27 (MKNRVISLLMASLLLVLSVIVAPFYKA) form the signal peptide. A GH16 domain is found at 28 to 248 (EAATVVNTPF…YVKYYPNGVP (221 aa)). The active-site Nucleophile is Glu136. The active-site Proton donor is the Glu140. The 68-residue stretch at 267–334 (NLPLKGDVNG…RYLIRAIPSL (68 aa)) folds into the Dockerin domain.

It belongs to the glycosyl hydrolase 16 family. In terms of assembly, may form part of a multienzyme complex (cellulosome).

The enzyme catalyses Hydrolysis of (1-&gt;4)-beta-D-glucosidic linkages in beta-D-glucans containing (1-&gt;3)- and (1-&gt;4)-bonds.. This is Beta-glucanase (licB) from Acetivibrio thermocellus (strain ATCC 27405 / DSM 1237 / JCM 9322 / NBRC 103400 / NCIMB 10682 / NRRL B-4536 / VPI 7372) (Clostridium thermocellum).